A 291-amino-acid polypeptide reads, in one-letter code: Gamma-sarcoglycan (291 aa).

A helical; Signal-anchor for type II membrane protein membrane pass occupies residues L38–L58. Residues K59–L291 are Extracellular-facing. An N-linked (GlcNAc...) asparagine glycan is attached at N110. Disulfide bonds link C265–C290 and C267–C283.

The protein belongs to the sarcoglycan beta/delta/gamma/zeta family. Interacts with the syntrophin SNTA1. Cross-link to form 2 major subcomplexes: one consisting of SGCB, SGCD and SGCG and the other consisting of SGCB and SGCD. The association between SGCB and SGCG is particularly strong while SGCA is loosely associated with the other sarcoglycans. Interacts with FLNC. Disulfide bonds are present.

It localises to the cell membrane. It is found in the sarcolemma. The protein resides in the cytoplasm. Its subcellular location is the cytoskeleton. Its function is as follows. Component of the sarcoglycan complex, a subcomplex of the dystrophin-glycoprotein complex which forms a link between the F-actin cytoskeleton and the extracellular matrix. This is Gamma-sarcoglycan (SGCG) from Canis lupus familiaris (Dog).